The primary structure comprises 443 residues: Probable protein S-acyltransferase 7 (443 aa).

2 helical membrane passes run 44–64 (SLALTICLIAVPVTIFCIFVA) and 76–96 (GVSIVAVAVVFTIYDLILLLL). A DHHC domain is found at 149–199 (KYCDTCMLYRPPRCSHCSICNNCVERFDHHCPWVGQCIGMRNYRFFFMFVF). Catalysis depends on C179, which acts as the S-palmitoyl cysteine intermediate. Transmembrane regions (helical) follow at residues 193–213 (FFFMFVFSTTLLCIYVFAFCW) and 237–257 (SIVLIIYTFISMWFVGGLTVF). S327 and S377 each carry phosphoserine. Positions 382–392 (ATVDEQSDRPS) are enriched in basic and acidic residues. The disordered stretch occupies residues 382-443 (ATVDEQSDRP…SGLVTENRPT (62 aa)). S406 is modified (phosphoserine).

The protein belongs to the DHHC palmitoyltransferase family.

It localises to the cell membrane. The catalysed reaction is L-cysteinyl-[protein] + hexadecanoyl-CoA = S-hexadecanoyl-L-cysteinyl-[protein] + CoA. Its function is as follows. Palmitoyl acyltransferase. The chain is Probable protein S-acyltransferase 7 (PAT07) from Arabidopsis thaliana (Mouse-ear cress).